The primary structure comprises 158 residues: Endoribonuclease YbeY (158 aa).

H119, H123, and H129 together coordinate Zn(2+).

This sequence belongs to the endoribonuclease YbeY family. It depends on Zn(2+) as a cofactor.

It is found in the cytoplasm. In terms of biological role, single strand-specific metallo-endoribonuclease involved in late-stage 70S ribosome quality control and in maturation of the 3' terminus of the 16S rRNA. The polypeptide is Endoribonuclease YbeY (Acinetobacter baumannii (strain SDF)).